Consider the following 367-residue polypeptide: Septin-1 (367 aa).

The Septin-type G domain occupies 22 to 296; the sequence is KGFDFTLMVA…EGYRARCLQS (275 aa). Positions 32-39 are G1 motif; the sequence is GESGLGKS. GTP contacts are provided by residues 32–39, Thr-66, Gly-92, and 171–179; these read GESGLGKS and KADALMPKE. Residues 89–92 are G3 motif; it reads DTPG. The G4 motif stretch occupies residues 170–173; sequence GKAD. A Phosphoserine modification is found at Ser-206. 2 residues coordinate GTP: Gly-229 and Arg-245. Phosphoserine; by AURKB is present on Ser-248. At Thr-251 the chain carries Phosphothreonine. 2 positions are modified to phosphoserine; by AURKB: Ser-307 and Ser-315.

Belongs to the TRAFAC class TrmE-Era-EngA-EngB-Septin-like GTPase superfamily. Septin GTPase family. Septins polymerize into heterooligomeric protein complexes that form filaments, and can associate with cellular membranes, actin filaments and microtubules. GTPase activity is required for filament formation. Interacts with AURKB.

Its subcellular location is the cytoplasm. It is found in the cytoskeleton. It localises to the microtubule organizing center. The protein localises to the centrosome. The protein resides in the midbody. Its function is as follows. Filament-forming cytoskeletal GTPase. May play a role in cytokinesis (Potential). The sequence is that of Septin-1 from Bos taurus (Bovine).